The primary structure comprises 427 residues: MSVKWEKQEGNVGKLTFEIEQEKVKEGLDRAFVKVRKTLNVPGFRKGKVPRQIFNQRFGEEALYQDALDILLPEVYSQAIDEAGIDPVDTPQVNIESMEKGETWVLTADVTVKPEVKLGDYKGLEVEKRETELTTEELEAELKQLQERQAELVVKEDAPAENGDTVILDFEGFKDGVAFEGGQAENHSLELGSGQFIPGFEEKLVGLKAGDEADIELTFPEEYHAEDLAGQPVVFKVKLHEIKTKEVPALDDELAKDIDEEVETLDELKEKISKRLQEAKEDSVAQAKQEEVIAKAVENAEVDIPHAMVHHEADHLMNHFAQDLQAQGLTPELYYQFTGQTEEAMHAQMEKDAEKRVKMNLVLEAIAEAENIEPTEEAIDEEISTLAEKYGMEKDAVRAALGDMSELKSDLKIRKAIDVLLDSAVEK.

The PPIase FKBP-type domain maps to glycine 163–proline 248.

This sequence belongs to the FKBP-type PPIase family. Tig subfamily.

The protein localises to the cytoplasm. It carries out the reaction [protein]-peptidylproline (omega=180) = [protein]-peptidylproline (omega=0). Functionally, involved in protein export. Acts as a chaperone by maintaining the newly synthesized protein in an open conformation. Functions as a peptidyl-prolyl cis-trans isomerase. This chain is Trigger factor, found in Listeria innocua serovar 6a (strain ATCC BAA-680 / CLIP 11262).